The primary structure comprises 218 residues: N-(5'-phosphoribosyl)anthranilate isomerase (218 aa).

It belongs to the TrpF family.

The enzyme catalyses N-(5-phospho-beta-D-ribosyl)anthranilate = 1-(2-carboxyphenylamino)-1-deoxy-D-ribulose 5-phosphate. It functions in the pathway amino-acid biosynthesis; L-tryptophan biosynthesis; L-tryptophan from chorismate: step 3/5. The chain is N-(5'-phosphoribosyl)anthranilate isomerase from Bordetella parapertussis (strain 12822 / ATCC BAA-587 / NCTC 13253).